Consider the following 699-residue polypeptide: Cyclic AMP-dependent transcription factor ATF-6 beta (699 aa).

Ala-2 is subject to N-acetylalanine. Residues Ala-2–Lys-393 are Cytoplasmic-facing. 3 disordered regions span residues Ser-59 to Gly-114, Val-218 to Val-246, and Glu-290 to Ser-313. The segment covering Pro-68 to Ile-78 has biased composition (pro residues). The span at Ser-86–Pro-109 shows a compositional bias: low complexity. Residues Leu-322–Leu-385 form the bZIP domain. The basic motif stretch occupies residues Lys-324–Lys-344. The interval Leu-347–Leu-354 is leucine-zipper. A helical; Signal-anchor for type II membrane protein membrane pass occupies residues Val-394–Ser-414. The Lumenal portion of the chain corresponds to Glu-415–Pro-699. Residues Pro-417 to Leu-474 are disordered. Residues Pro-458–Gly-467 are compositionally biased toward polar residues. 2 N-linked (GlcNAc...) asparagine glycosylation sites follow: Asn-473 and Asn-502. The span at Arg-519–His-529 shows a compositional bias: basic residues. The tract at residues Arg-519–Gly-563 is disordered. Pro residues predominate over residues Pro-545 to Pro-556. Asn-607, Asn-624, and Asn-673 each carry an N-linked (GlcNAc...) asparagine glycan. The disordered stretch occupies residues Ser-657–Pro-699. Low complexity predominate over residues Pro-680–Pro-693.

This sequence belongs to the bZIP family. ATF subfamily. As to quaternary structure, homodimer and heterodimer with ATF6-alpha. The dimer interacts with the nuclear transcription factor Y (NF-Y) trimer through direct binding to NF-Y subunit C (NF-YC). In terms of processing, N-glycosylated. Post-translationally, during unfolded protein response, a fragment of approximately 60 kDa containing the cytoplasmic transcription factor domain is released by proteolysis. The cleavage is probably performed sequentially by site-1 (MBTPS1, S1P) and site-2 (MBTPS2, S2P) proteases.

It is found in the endoplasmic reticulum membrane. The protein localises to the nucleus. In terms of biological role, precursor of the transcription factor form (Processed cyclic AMP-dependent transcription factor ATF-6 beta), which is embedded in the endoplasmic reticulum membrane. Endoplasmic reticulum stress promotes processing of this form, releasing the transcription factor form that translocates into the nucleus, where it activates transcription of genes involved in the unfolded protein response (UPR). Functionally, transcription factor that acts in the unfolded protein response (UPR) pathway by activating UPR target genes induced during ER stress. Binds DNA on the 5'-CCAC[GA]-3' half of the ER stress response element (ERSE) (5'-CCAATN(9)CCAC[GA]-3') when NF-Y is bound to ERSE. The chain is Cyclic AMP-dependent transcription factor ATF-6 beta (Atf6b) from Mus musculus (Mouse).